A 256-amino-acid chain; its full sequence is 1-(5-phosphoribosyl)-5-[(5-phosphoribosylamino)methylideneamino] imidazole-4-carboxamide isomerase (256 aa).

The active-site Proton acceptor is the D8. The active-site Proton donor is the D130.

This sequence belongs to the HisA/HisF family.

Its subcellular location is the cytoplasm. The catalysed reaction is 1-(5-phospho-beta-D-ribosyl)-5-[(5-phospho-beta-D-ribosylamino)methylideneamino]imidazole-4-carboxamide = 5-[(5-phospho-1-deoxy-D-ribulos-1-ylimino)methylamino]-1-(5-phospho-beta-D-ribosyl)imidazole-4-carboxamide. It participates in amino-acid biosynthesis; L-histidine biosynthesis; L-histidine from 5-phospho-alpha-D-ribose 1-diphosphate: step 4/9. The sequence is that of 1-(5-phosphoribosyl)-5-[(5-phosphoribosylamino)methylideneamino] imidazole-4-carboxamide isomerase from Pelodictyon phaeoclathratiforme (strain DSM 5477 / BU-1).